Here is a 144-residue protein sequence, read N- to C-terminus: Maximins 3/H14 (144 aa).

The N-terminal stretch at 1–18 (MNFKYIVAVSFLIASAYA) is a signal peptide. Propeptides lie at residues 19–43 (RSVQ…REIR) and 73–122 (RTAE…KKEK). Isoleucine 143 is modified (isoleucine amide).

Belongs to the bombinin family. In terms of tissue distribution, expressed by the skin glands.

It localises to the secreted. Functionally, maximin-3 shows antibacterial activity against both Gram-positive and Gram-negative bacteria. It also shows antimicrobial activity against the fungus C.albicans, but not against A.flavus nor P.uticale. It has little hemolytic activity. It possess a significant cytotoxicity against tumor cell lines. It possess a significant anti-HIV activity. It shows high spermicidal activity. Its function is as follows. Maximin-H14 shows antimicrobial activity against bacteria and against the fungus C.albicans. Shows strong hemolytic activity. This chain is Maximins 3/H14, found in Bombina maxima (Giant fire-bellied toad).